Reading from the N-terminus, the 141-residue chain is Hemoglobin subunit alpha (141 aa).

Positions 1-141 (VLSAEDKANV…VSTVLTSKYR (141 aa)) constitute a Globin domain. S3 is subject to Phosphoserine. K7 and K11 each carry N6-succinyllysine. Position 16 is an N6-acetyllysine; alternate (K16). K16 is modified (N6-succinyllysine; alternate). A Phosphotyrosine modification is found at Y24. S35 is modified (phosphoserine). N6-succinyllysine is present on K40. S49 is subject to Phosphoserine. H58 contacts O2. Residue H87 participates in heme b binding. A Phosphoserine modification is found at S102. Phosphothreonine is present on T108. A phosphoserine mark is found at S124 and S131. Residues T134 and T137 each carry the phosphothreonine modification. S138 carries the phosphoserine modification.

The protein belongs to the globin family. Heterotetramer of two alpha chains and two beta chains. Red blood cells.

In terms of biological role, involved in oxygen transport from the lung to the various peripheral tissues. The sequence is that of Hemoglobin subunit alpha from Peromyscus crinitus (Canyon mouse).